A 179-amino-acid polypeptide reads, in one-letter code: ATP synthase subunit delta (179 aa).

This sequence belongs to the ATPase delta chain family. As to quaternary structure, F-type ATPases have 2 components, F(1) - the catalytic core - and F(0) - the membrane proton channel. F(1) has five subunits: alpha(3), beta(3), gamma(1), delta(1), epsilon(1). F(0) has three main subunits: a(1), b(2) and c(10-14). The alpha and beta chains form an alternating ring which encloses part of the gamma chain. F(1) is attached to F(0) by a central stalk formed by the gamma and epsilon chains, while a peripheral stalk is formed by the delta and b chains.

It is found in the cell membrane. Its function is as follows. F(1)F(0) ATP synthase produces ATP from ADP in the presence of a proton or sodium gradient. F-type ATPases consist of two structural domains, F(1) containing the extramembraneous catalytic core and F(0) containing the membrane proton channel, linked together by a central stalk and a peripheral stalk. During catalysis, ATP synthesis in the catalytic domain of F(1) is coupled via a rotary mechanism of the central stalk subunits to proton translocation. In terms of biological role, this protein is part of the stalk that links CF(0) to CF(1). It either transmits conformational changes from CF(0) to CF(1) or is implicated in proton conduction. The chain is ATP synthase subunit delta from Staphylococcus aureus (strain bovine RF122 / ET3-1).